The following is a 250-amino-acid chain: Dihydroorotate dehydrogenase B (NAD(+)), electron transfer subunit (250 aa).

Positions 1–94 (MKVVAQEEIA…MGPQGNGFDL (94 aa)) constitute an FAD-binding FR-type domain. Residues 45-48 (RPIS), 62-64 (IYR), and 69-70 (GT) each bind FAD. Positions 214, 219, 222, and 237 each coordinate [2Fe-2S] cluster.

It belongs to the PyrK family. Heterotetramer of 2 PyrK and 2 PyrD type B subunits. Requires [2Fe-2S] cluster as cofactor. FAD serves as cofactor.

Its pathway is pyrimidine metabolism; UMP biosynthesis via de novo pathway; orotate from (S)-dihydroorotate (NAD(+) route): step 1/1. Its function is as follows. Responsible for channeling the electrons from the oxidation of dihydroorotate from the FMN redox center in the PyrD type B subunit to the ultimate electron acceptor NAD(+). The protein is Dihydroorotate dehydrogenase B (NAD(+)), electron transfer subunit of Streptococcus pneumoniae serotype 4 (strain ATCC BAA-334 / TIGR4).